Consider the following 553-residue polypeptide: uncharacterized protein (553 aa).

Residues arginine 26–glutamate 109 form the SWIB/MDM2 domain. The 126-residue stretch at alanine 150–threonine 275 folds into the Plus3 domain. Disordered regions lie at residues glutamine 335–proline 357 and proline 447–aspartate 482. A compositionally biased stretch (basic and acidic residues) spans glutamate 343–leucine 353. The segment covering proline 447–proline 461 has biased composition (polar residues). Acidic residues predominate over residues glutamate 466 to threonine 480. Residues lysine 497–arginine 551 enclose the GYF domain.

This is an uncharacterized protein from Arabidopsis thaliana (Mouse-ear cress).